The following is a 304-amino-acid chain: Ribosomal RNA small subunit methyltransferase H (304 aa).

S-adenosyl-L-methionine-binding positions include 37 to 39 (GGH), D57, F79, D100, and H107.

Belongs to the methyltransferase superfamily. RsmH family.

Its subcellular location is the cytoplasm. The enzyme catalyses cytidine(1402) in 16S rRNA + S-adenosyl-L-methionine = N(4)-methylcytidine(1402) in 16S rRNA + S-adenosyl-L-homocysteine + H(+). Specifically methylates the N4 position of cytidine in position 1402 (C1402) of 16S rRNA. This Bacteroides fragilis (strain YCH46) protein is Ribosomal RNA small subunit methyltransferase H.